The sequence spans 63 residues: uncharacterized protein (63 aa).

Residues 15–37 (ISHCHLPLSPATAIAIIICFRIV) form a helical membrane-spanning segment.

It is found in the membrane. This is an uncharacterized protein from Saccharomyces cerevisiae (strain ATCC 204508 / S288c) (Baker's yeast).